The primary structure comprises 250 residues: Leucyl/phenylalanyl-tRNA--protein transferase (250 aa).

It belongs to the L/F-transferase family.

The protein localises to the cytoplasm. The catalysed reaction is N-terminal L-lysyl-[protein] + L-leucyl-tRNA(Leu) = N-terminal L-leucyl-L-lysyl-[protein] + tRNA(Leu) + H(+). The enzyme catalyses N-terminal L-arginyl-[protein] + L-leucyl-tRNA(Leu) = N-terminal L-leucyl-L-arginyl-[protein] + tRNA(Leu) + H(+). It carries out the reaction L-phenylalanyl-tRNA(Phe) + an N-terminal L-alpha-aminoacyl-[protein] = an N-terminal L-phenylalanyl-L-alpha-aminoacyl-[protein] + tRNA(Phe). Functionally, functions in the N-end rule pathway of protein degradation where it conjugates Leu, Phe and, less efficiently, Met from aminoacyl-tRNAs to the N-termini of proteins containing an N-terminal arginine or lysine. In Cupriavidus necator (strain ATCC 17699 / DSM 428 / KCTC 22496 / NCIMB 10442 / H16 / Stanier 337) (Ralstonia eutropha), this protein is Leucyl/phenylalanyl-tRNA--protein transferase.